The primary structure comprises 352 residues: C-C chemokine receptor type 5 (352 aa).

Residues 1–30 are Extracellular-facing; sequence MDYQVSSPTYDIDYYTSGPCQKINVKQIAA. Residue Y3 is modified to Sulfotyrosine. Residues S6 and S7 are each glycosylated (O-linked (GalNAc...) serine). 3 positions are modified to sulfotyrosine: Y10, Y14, and Y15. Cystine bridges form between C20–C269 and C101–C178. Residues 31–58 form a helical membrane-spanning segment; it reads RLLPPLYSLVFIFGFVGNMLVILILINC. At 59 to 68 the chain is on the cytoplasmic side; that stretch reads KRLKSMTDIY. The helical transmembrane segment at 69–89 threads the bilayer; it reads LLNLAISDLFFLLTVPFWAHY. The Extracellular portion of the chain corresponds to 90–102; it reads AAAQWDFGNTMCQ. The helical transmembrane segment at 103–124 threads the bilayer; sequence LLTGLYFIGFFSGIFFIILLTI. Topologically, residues 125 to 141 are cytoplasmic; it reads DRYLAIVHAVFALKART. Residues 142 to 166 traverse the membrane as a helical segment; the sequence is VTFGVVTSVITWVVAVFASLPGIIF. Topologically, residues 167–198 are extracellular; that stretch reads TRSQKEGLHYTCSSHFPYSQYQFWKNFQTLKI. Residues 199 to 218 traverse the membrane as a helical segment; the sequence is VILGLVLPLLVMVICYSGIL. Topologically, residues 219 to 235 are cytoplasmic; the sequence is KTLLRCRNEKKRHRAVR. A helical membrane pass occupies residues 236–260; that stretch reads LIFTIMIVYFLFWAPYNIVLLLNTF. The Extracellular portion of the chain corresponds to 261 to 277; the sequence is QEFFGLNNCSSSNRLDQ. The helical transmembrane segment at 278 to 301 threads the bilayer; sequence AMQVTETLGMTHCCINPIIYAFVG. The Cytoplasmic segment spans residues 302–352; sequence EKFRNYLLVFFQKHIAKHFCKCCSIFQQEAPERASSVYTRSTGEQEISVGL. S-palmitoyl cysteine attachment occurs at residues C321, C323, and C324. Residues S336, S337, S342, and S349 each carry the phosphoserine; by BARK1 modification.

The protein belongs to the G-protein coupled receptor 1 family. As to quaternary structure, interacts with PRAF2. Efficient ligand binding to CCL3/MIP-1alpha and CCL4/MIP-1beta requires sulfation, O-glycosylation and sialic acid modifications. Glycosylation on Ser-6 is required for efficient binding of CCL4. Interacts with GRK2. Interacts with ARRB1 and ARRB2. Interacts with CNIH4. Interacts with S100A4; this interaction stimulates T-lymphocyte chemotaxis. In terms of processing, sulfated on at least 2 of the N-terminal tyrosines. Sulfation is required for efficient binding of the chemokines, CCL3 and CCL4. Post-translationally, palmitoylation in the C-terminal is important for cell surface expression. Phosphorylation on serine residues in the C-terminal is stimulated by binding CC chemokines especially by APO-RANTES. In terms of processing, O-glycosylated, but not N-glycosylated. Ser-6 appears to be the major site even if Ser-7 may be also O-glycosylated. Also sialylated glycans present which contribute to chemokine binding. Thr-16 and Ser-17 may also be glycosylated and, if so, with small moieties such as a T-antigen.

Its subcellular location is the cell membrane. Its function is as follows. Receptor for a number of inflammatory CC-chemokines including CCL3/MIP-1-alpha, CCL4/MIP-1-beta and RANTES and subsequently transduces a signal by increasing the intracellular calcium ion level. May play a role in the control of granulocytic lineage proliferation or differentiation. Participates in T-lymphocyte migration to the infection site by acting as a chemotactic receptor. The protein is C-C chemokine receptor type 5 (CCR5) of Hylobates moloch (Silvery gibbon).